We begin with the raw amino-acid sequence, 1407 residues long: DNA-directed RNA polymerase subunit beta' (1407 aa).

Residues cysteine 70, cysteine 72, cysteine 85, and cysteine 88 each contribute to the Zn(2+) site. Mg(2+)-binding residues include aspartate 460, aspartate 462, and aspartate 464. Residues cysteine 814, cysteine 888, cysteine 895, and cysteine 898 each contribute to the Zn(2+) site.

The protein belongs to the RNA polymerase beta' chain family. In terms of assembly, the RNAP catalytic core consists of 2 alpha, 1 beta, 1 beta' and 1 omega subunit. When a sigma factor is associated with the core the holoenzyme is formed, which can initiate transcription. It depends on Mg(2+) as a cofactor. Requires Zn(2+) as cofactor.

The catalysed reaction is RNA(n) + a ribonucleoside 5'-triphosphate = RNA(n+1) + diphosphate. DNA-dependent RNA polymerase catalyzes the transcription of DNA into RNA using the four ribonucleoside triphosphates as substrates. This Cellvibrio japonicus (strain Ueda107) (Pseudomonas fluorescens subsp. cellulosa) protein is DNA-directed RNA polymerase subunit beta'.